The sequence spans 205 residues: Probable GTP-binding protein EngB (205 aa).

One can recognise an EngB-type G domain in the interval 27–201; the sequence is TGIEIAFAGR…AAKLDFWFSP (175 aa). Residues 35-42, 62-66, 80-83, 147-150, and 180-182 each bind GTP; these read GRSNAGKS, GRTQL, DLPG, TKAD, and FSA. S42 and T64 together coordinate Mg(2+).

It belongs to the TRAFAC class TrmE-Era-EngA-EngB-Septin-like GTPase superfamily. EngB GTPase family. Mg(2+) serves as cofactor.

Its function is as follows. Necessary for normal cell division and for the maintenance of normal septation. The sequence is that of Probable GTP-binding protein EngB from Haemophilus influenzae (strain 86-028NP).